Here is a 685-residue protein sequence, read N- to C-terminus: MTSSTDSVPVITFADSPFRLHQPFPPAGDQPAAIELLTEGIGDGLMYQTLLGVTGSGKTYTMANVIARCGRPALVLAPNKTLAAQLYAEFREFFPENAVEYFVSYYDYYQPEAYVPSRDLFIEKDSSINEHIEQMRLSATKSLMERRDVVIVATVSCIYGIGDPVDYHAMILHLREGERIAHRDLVQRLVAMQYTRSDIDFRRGTFRVRGDVIDVFPAENAELAVRIEMFDDEVEHLTLFDPLTGHLKQKLVRFTVYPSSHYVTPRATVLKAIEAIKDELRDRSAWFQTSGKLVEAQRIEQRTRFDLEMLNEMGFCKGIENYSRHLSGRGQGEPPPTLIDYLPSDALLFVDESHVSIPQVGGMYKGDRSRKENLVGYGFRLPSALDNRPLKFEEFERLMPQTIFVSATPSTYEAEHQGQVVEQVVRPTGLIDPAIDVRPATTQVDDLLSEAKRRIAVGERVLVTTLTKRMAEDLTDYLAENGIRVRYLHSDIDTVERVEIIRDLRLGKFDVLVGINLLREGLDIPEVSLVAILDADKEGFLRSERSLIQTIGRAARHINGRAILYADVVTRSMRAAIDETERRRVKQIAFNQANGIVPKTVSKRIKDIIDGVYGGDVERDGRSVAEPPPEYFSMNEKTVAKSIRKLEKEMQEHARNLEFEKAAAARDELFRLRQRTFGADQHGTP.

A Helicase ATP-binding domain is found at 39-420 (EGIGDGLMYQ…TYEAEHQGQV (382 aa)). 52–59 (GVTGSGKT) lines the ATP pocket. The short motif at 105–128 (YYDYYQPEAYVPSRDLFIEKDSSI) is the Beta-hairpin element. The 154-residue stretch at 443-596 (QVDDLLSEAK…QIAFNQANGI (154 aa)) folds into the Helicase C-terminal domain. A UVR domain is found at 640-675 (AKSIRKLEKEMQEHARNLEFEKAAAARDELFRLRQR).

This sequence belongs to the UvrB family. In terms of assembly, forms a heterotetramer with UvrA during the search for lesions. Interacts with UvrC in an incision complex.

It is found in the cytoplasm. Functionally, the UvrABC repair system catalyzes the recognition and processing of DNA lesions. A damage recognition complex composed of 2 UvrA and 2 UvrB subunits scans DNA for abnormalities. Upon binding of the UvrA(2)B(2) complex to a putative damaged site, the DNA wraps around one UvrB monomer. DNA wrap is dependent on ATP binding by UvrB and probably causes local melting of the DNA helix, facilitating insertion of UvrB beta-hairpin between the DNA strands. Then UvrB probes one DNA strand for the presence of a lesion. If a lesion is found the UvrA subunits dissociate and the UvrB-DNA preincision complex is formed. This complex is subsequently bound by UvrC and the second UvrB is released. If no lesion is found, the DNA wraps around the other UvrB subunit that will check the other stand for damage. The chain is UvrABC system protein B from Aromatoleum aromaticum (strain DSM 19018 / LMG 30748 / EbN1) (Azoarcus sp. (strain EbN1)).